We begin with the raw amino-acid sequence, 306 residues long: Lipoyl synthase (306 aa).

Positions 52, 57, 63, 78, 82, 85, and 289 each coordinate [4Fe-4S] cluster. The Radical SAM core domain occupies Trp-64 to Lys-278.

Belongs to the radical SAM superfamily. Lipoyl synthase family. [4Fe-4S] cluster is required as a cofactor.

It localises to the cytoplasm. It catalyses the reaction [[Fe-S] cluster scaffold protein carrying a second [4Fe-4S](2+) cluster] + N(6)-octanoyl-L-lysyl-[protein] + 2 oxidized [2Fe-2S]-[ferredoxin] + 2 S-adenosyl-L-methionine + 4 H(+) = [[Fe-S] cluster scaffold protein] + N(6)-[(R)-dihydrolipoyl]-L-lysyl-[protein] + 4 Fe(3+) + 2 hydrogen sulfide + 2 5'-deoxyadenosine + 2 L-methionine + 2 reduced [2Fe-2S]-[ferredoxin]. The protein operates within protein modification; protein lipoylation via endogenous pathway; protein N(6)-(lipoyl)lysine from octanoyl-[acyl-carrier-protein]: step 2/2. Its function is as follows. Catalyzes the radical-mediated insertion of two sulfur atoms into the C-6 and C-8 positions of the octanoyl moiety bound to the lipoyl domains of lipoate-dependent enzymes, thereby converting the octanoylated domains into lipoylated derivatives. This Leptospira biflexa serovar Patoc (strain Patoc 1 / Ames) protein is Lipoyl synthase.